Here is a 228-residue protein sequence, read N- to C-terminus: Ribonuclease 3 (228 aa).

The region spanning 2–130 is the RNase III domain; the sequence is LTYLEQKINY…LLAAVYLDGG (129 aa). Residue glutamate 43 participates in Mg(2+) binding. Aspartate 47 is a catalytic residue. The Mg(2+) site is built by aspartate 116 and glutamate 119. Glutamate 119 is an active-site residue. The 70-residue stretch at 157–226 folds into the DRBM domain; the sequence is DYKTRLQEVV…AMEALSKLGI (70 aa).

This sequence belongs to the ribonuclease III family. In terms of assembly, homodimer. Mg(2+) serves as cofactor.

The protein resides in the cytoplasm. It catalyses the reaction Endonucleolytic cleavage to 5'-phosphomonoester.. Functionally, digests double-stranded RNA. Involved in the processing of primary rRNA transcript to yield the immediate precursors to the large and small rRNAs (23S and 16S). Processes some mRNAs, and tRNAs when they are encoded in the rRNA operon. Processes pre-crRNA and tracrRNA of type II CRISPR loci if present in the organism. This is Ribonuclease 3 from Caldanaerobacter subterraneus subsp. tengcongensis (strain DSM 15242 / JCM 11007 / NBRC 100824 / MB4) (Thermoanaerobacter tengcongensis).